The sequence spans 206 residues: Methylthioribulose-1-phosphate dehydratase (206 aa).

Residues His-96 and His-98 each contribute to the Zn(2+) site.

It belongs to the aldolase class II family. MtnB subfamily. Zn(2+) is required as a cofactor.

It carries out the reaction 5-(methylsulfanyl)-D-ribulose 1-phosphate = 5-methylsulfanyl-2,3-dioxopentyl phosphate + H2O. The protein operates within amino-acid biosynthesis; L-methionine biosynthesis via salvage pathway; L-methionine from S-methyl-5-thio-alpha-D-ribose 1-phosphate: step 2/6. Functionally, catalyzes the dehydration of methylthioribulose-1-phosphate (MTRu-1-P) into 2,3-diketo-5-methylthiopentyl-1-phosphate (DK-MTP-1-P). This chain is Methylthioribulose-1-phosphate dehydratase, found in Azotobacter vinelandii (strain DJ / ATCC BAA-1303).